We begin with the raw amino-acid sequence, 310 residues long: 4-diphosphocytidyl-2-C-methyl-D-erythritol kinase (310 aa).

The active site involves Lys-20. 106–116 (PMGGGLGGGSS) provides a ligand contact to ATP. Residue Asp-148 is part of the active site.

The protein belongs to the GHMP kinase family. IspE subfamily. As to quaternary structure, homodimer.

It carries out the reaction 4-CDP-2-C-methyl-D-erythritol + ATP = 4-CDP-2-C-methyl-D-erythritol 2-phosphate + ADP + H(+). Its pathway is isoprenoid biosynthesis; isopentenyl diphosphate biosynthesis via DXP pathway; isopentenyl diphosphate from 1-deoxy-D-xylulose 5-phosphate: step 3/6. Its function is as follows. Catalyzes the phosphorylation of the position 2 hydroxy group of 4-diphosphocytidyl-2C-methyl-D-erythritol. The chain is 4-diphosphocytidyl-2-C-methyl-D-erythritol kinase from Yersinia pseudotuberculosis serotype O:3 (strain YPIII).